Here is a 100-residue protein sequence, read N- to C-terminus: NADH-quinone oxidoreductase subunit K (100 aa).

3 helical membrane-spanning segments follow: residues 4–24, 28–48, and 60–80; these read LQHGLILSAILFVLGLTGLVI, LLFMLIGLEIMINASALAFVV, and VMYILAISLAAAEASIGLALL.

Belongs to the complex I subunit 4L family. In terms of assembly, NDH-1 is composed of 13 different subunits. Subunits NuoA, H, J, K, L, M, N constitute the membrane sector of the complex.

The protein resides in the cell inner membrane. The enzyme catalyses a quinone + NADH + 5 H(+)(in) = a quinol + NAD(+) + 4 H(+)(out). In terms of biological role, NDH-1 shuttles electrons from NADH, via FMN and iron-sulfur (Fe-S) centers, to quinones in the respiratory chain. The immediate electron acceptor for the enzyme in this species is believed to be ubiquinone. Couples the redox reaction to proton translocation (for every two electrons transferred, four hydrogen ions are translocated across the cytoplasmic membrane), and thus conserves the redox energy in a proton gradient. The protein is NADH-quinone oxidoreductase subunit K of Shigella boydii serotype 18 (strain CDC 3083-94 / BS512).